The sequence spans 1275 residues: Serine/threonine-protein kinase ULK4 (1275 aa).

Positions F4–W280 constitute a Protein kinase domain. D121 functions as the Proton acceptor in the catalytic mechanism. Disordered stretches follow at residues S299–P346 and F359–T393. Residues F336–P346 are compositionally biased toward basic and acidic residues. Polar residues-rich tracts occupy residues S363–V373 and C384–T393. HEAT repeat units follow at residues L727 to E765, L842 to H880, S926 to N964, L1025 to A1063, N1151 to G1189, and P1213 to G1253.

It belongs to the protein kinase superfamily. Ser/Thr protein kinase family. APG1/unc-51/ULK1 subfamily.

The catalysed reaction is L-seryl-[protein] + ATP = O-phospho-L-seryl-[protein] + ADP + H(+). It carries out the reaction L-threonyl-[protein] + ATP = O-phospho-L-threonyl-[protein] + ADP + H(+). In terms of biological role, may be involved in the remodeling of cytoskeletal components, such as alpha-tubulin, and in this way regulates neurite branching and elongation, as well as cell motility. The polypeptide is Serine/threonine-protein kinase ULK4 (ULK4) (Pongo abelii (Sumatran orangutan)).